The sequence spans 199 residues: dTTP/UTP pyrophosphatase (199 aa).

The active-site Proton acceptor is Asp73.

This sequence belongs to the Maf family. YhdE subfamily. A divalent metal cation serves as cofactor.

It localises to the cytoplasm. It carries out the reaction dTTP + H2O = dTMP + diphosphate + H(+). It catalyses the reaction UTP + H2O = UMP + diphosphate + H(+). Nucleoside triphosphate pyrophosphatase that hydrolyzes dTTP and UTP. May have a dual role in cell division arrest and in preventing the incorporation of modified nucleotides into cellular nucleic acids. The sequence is that of dTTP/UTP pyrophosphatase from Caldicellulosiruptor bescii (strain ATCC BAA-1888 / DSM 6725 / KCTC 15123 / Z-1320) (Anaerocellum thermophilum).